The sequence spans 216 residues: Large ribosomal subunit protein uL1y (216 aa).

This sequence belongs to the universal ribosomal protein uL1 family. Interacts with the GTPase NUG2.

The protein is Large ribosomal subunit protein uL1y (RPL10AB) of Arabidopsis thaliana (Mouse-ear cress).